Here is a 381-residue protein sequence, read N- to C-terminus: Creatine kinase B-type (381 aa).

Phosphoserine is present on S4. The 88-residue stretch at 11–98 (KLRFPAEDEF…FDPIIEDRHG (88 aa)) folds into the Phosphagen kinase N-terminal domain. The residue at position 35 (T35) is a Phosphothreonine. Residue K45 forms a Glycyl lysine isopeptide (Lys-Gly) (interchain with G-Cter in ubiquitin) linkage. Creatine is bound at residue V72. Basic and acidic residues predominate over residues 96–110 (RHGGYKPSDEHKTDL). A disordered region spans residues 96 to 123 (RHGGYKPSDEHKTDLNPDNLQGGDDLDP). Residues K101 and K107 each participate in a glycyl lysine isopeptide (Lys-Gly) (interchain with G-Cter in ubiquitin) cross-link. Residue Y125 is modified to Phosphotyrosine. The Phosphagen kinase C-terminal domain occupies 125-367 (YVLSSRVRTG…KLLIEMEQRL (243 aa)). ATP is bound by residues 128-132 (SSRVR), R130, R132, and H191. Positions 130–138 (RVRTGRSIR) are internal MTS-like signal. S199 is subject to Phosphoserine. E232 provides a ligand contact to creatine. R236 contributes to the ATP binding site. The residue at position 269 (Y269) is a 3'-nitrotyrosine. S285 contacts creatine. R292 serves as a coordination point for ATP. S309 is modified (phosphoserine). ATP contacts are provided by residues R320, 320 to 325 (RGTGGV), and D335. T322 bears the Phosphothreonine mark. A Glycyl lysine isopeptide (Lys-Gly) (interchain with G-Cter in ubiquitin) cross-link involves residue K381.

Belongs to the ATP:guanido phosphotransferase family. In terms of assembly, dimer of identical or non-identical chains, which can be either B (brain type) or M (muscle type). With MM being the major form in skeletal muscle and myocardium, MB existing in myocardium, and BB existing in many tissues, especially brain. Interacts with SLC12A6 (via C-terminus); the interaction may be required for SLC12A6 potassium-chloride cotransport activity. Ubiquitinated by the ECS(ASB9) complex, leading to its degradation by the proteasome.

Its subcellular location is the cytoplasm. The protein resides in the cytosol. It is found in the mitochondrion. The protein localises to the cell membrane. The catalysed reaction is creatine + ATP = N-phosphocreatine + ADP + H(+). Reversibly catalyzes the transfer of phosphate between ATP and various phosphogens (e.g. creatine phosphate). Creatine kinase isoenzymes play a central role in energy transduction in tissues with large, fluctuating energy demands, such as skeletal muscle, heart, brain and spermatozoa. Acts as a key regulator of adaptive thermogenesis as part of the futile creatine cycle: localizes to the mitochondria of thermogenic fat cells and acts by mediating phosphorylation of creatine to initiate a futile cycle of creatine phosphorylation and dephosphorylation. During the futile creatine cycle, creatine and N-phosphocreatine are in a futile cycle, which dissipates the high energy charge of N-phosphocreatine as heat without performing any mechanical or chemical work. This is Creatine kinase B-type (CKB) from Oryctolagus cuniculus (Rabbit).